The sequence spans 173 residues: MDVTIQHPWFKRTLGPFYPSRLFDQFFGEGLFEYDLLPFLSSTISPYYRQSLFRTVLDSGISEVRSDRDKFVIFLDVKHFSPEDLTVKVQEDFVEIHGKHNERQDDHGYISREFHRRYRLPSNVDQSALSCSLSADGMLTFSGPKVQSGLDAGHSERAIPVSREEKPSSAPSS.

M1 is modified (N-acetylmethionine). The required for complex formation with BFSP1 and BFSP2 stretch occupies residues 1-63; sequence MDVTIQHPWF…RTVLDSGISE (63 aa). Q6 is subject to Deamidated glutamine; partial. A Phosphoserine modification is found at S45. Deamidated glutamine; partial is present on Q50. A sHSP domain is found at 52-162; it reads LFRTVLDSGI…GHSERAIPVS (111 aa). K70 is subject to N6-acetyllysine. The residue at position 90 (Q90) is a Deamidated glutamine; partial. K99 is modified (N6-acetyllysine). A Zn(2+)-binding site is contributed by H100. Deamidated asparagine; partial is present on N101. The Zn(2+) site is built by E102 and H107. A Phosphoserine modification is found at S122. A Deamidated asparagine; partial modification is found at N123. Residues 145–173 form a disordered region; that stretch reads KVQSGLDAGHSERAIPVSREEKPSSAPSS. Position 147 is a deamidated glutamine; partial (Q147). Residues 153–167 are compositionally biased toward basic and acidic residues; that stretch reads GHSERAIPVSREEKP. A Zn(2+)-binding site is contributed by H154. S162 carries O-linked (GlcNAc) serine glycosylation.

It belongs to the small heat shock protein (HSP20) family. In terms of assembly, heteromer composed of three CRYAA and one CRYAB subunits. Inter-subunit bridging via zinc ions enhances stability, which is crucial as there is no protein turn over in the lens. Can also form homodimers and homotetramers (dimers of dimers) which serve as the building blocks of homooligomers. Within homooligomers, the zinc-binding motif is created from residues of 3 different molecules. His-100 and Glu-102 from one molecule are ligands of the zinc ion, and His-107 and His-154 residues from additional molecules complete the site with tetrahedral coordination geometry. Part of a complex required for lens intermediate filament formation composed of BFSP1, BFSP2 and CRYAA. In terms of processing, acetylation at Lys-70 may increase chaperone activity. Post-translationally, undergoes age-dependent proteolytical cleavage at the C-terminus.

The protein resides in the cytoplasm. Its subcellular location is the nucleus. Contributes to the transparency and refractive index of the lens. Acts as a chaperone, preventing aggregation of various proteins under a wide range of stress conditions. Required for the correct formation of lens intermediate filaments as part of a complex composed of BFSP1, BFSP2 and CRYAA. The chain is Alpha-crystallin A chain (CRYAA) from Oryctolagus cuniculus (Rabbit).